We begin with the raw amino-acid sequence, 268 residues long: Ribosomal RNA small subunit methyltransferase A (268 aa).

Positions 21, 23, 48, 69, 94, and 115 each coordinate S-adenosyl-L-methionine.

The protein belongs to the class I-like SAM-binding methyltransferase superfamily. rRNA adenine N(6)-methyltransferase family. RsmA subfamily.

It is found in the cytoplasm. It carries out the reaction adenosine(1518)/adenosine(1519) in 16S rRNA + 4 S-adenosyl-L-methionine = N(6)-dimethyladenosine(1518)/N(6)-dimethyladenosine(1519) in 16S rRNA + 4 S-adenosyl-L-homocysteine + 4 H(+). Functionally, specifically dimethylates two adjacent adenosines (A1518 and A1519) in the loop of a conserved hairpin near the 3'-end of 16S rRNA in the 30S particle. May play a critical role in biogenesis of 30S subunits. The sequence is that of Ribosomal RNA small subunit methyltransferase A from Saccharophagus degradans (strain 2-40 / ATCC 43961 / DSM 17024).